Consider the following 516-residue polypeptide: GMP synthase [glutamine-hydrolyzing] (516 aa).

The Glutamine amidotransferase type-1 domain maps to 8 to 198 (KILILDFGSQ…VVNICGCDTL (191 aa)). Cys-84 functions as the Nucleophile in the catalytic mechanism. Catalysis depends on residues His-172 and Glu-174. The region spanning 199 to 391 (WNIENIIEND…LGLPYNMLYR (193 aa)) is the GMPS ATP-PPase domain. 226-232 (SGGVDSS) provides a ligand contact to ATP.

As to quaternary structure, homodimer.

The catalysed reaction is XMP + L-glutamine + ATP + H2O = GMP + L-glutamate + AMP + diphosphate + 2 H(+). The protein operates within purine metabolism; GMP biosynthesis; GMP from XMP (L-Gln route): step 1/1. Catalyzes the synthesis of GMP from XMP. The polypeptide is GMP synthase [glutamine-hydrolyzing] (Francisella tularensis subsp. tularensis (strain FSC 198)).